The following is a 428-amino-acid chain: Phosphomethylpyrimidine synthase 1 (428 aa).

Substrate-binding positions include Met94, Tyr123, His162, 184-186, 225-228, and Glu264; these read SRG and NGMR. His268 is a Zn(2+) binding site. Tyr291 contacts substrate. His332 lines the Zn(2+) pocket. 3 residues coordinate [4Fe-4S] cluster: Cys408, Cys411, and Cys415.

This sequence belongs to the ThiC family. [4Fe-4S] cluster is required as a cofactor.

The catalysed reaction is 5-amino-1-(5-phospho-beta-D-ribosyl)imidazole + S-adenosyl-L-methionine = 4-amino-2-methyl-5-(phosphooxymethyl)pyrimidine + CO + 5'-deoxyadenosine + formate + L-methionine + 3 H(+). It participates in cofactor biosynthesis; thiamine diphosphate biosynthesis. Its function is as follows. Catalyzes the synthesis of the hydroxymethylpyrimidine phosphate (HMP-P) moiety of thiamine from aminoimidazole ribotide (AIR) in a radical S-adenosyl-L-methionine (SAM)-dependent reaction. The protein is Phosphomethylpyrimidine synthase 1 of Methanosarcina barkeri (strain Fusaro / DSM 804).